The chain runs to 515 residues: Bifunctional purine biosynthesis protein PurH (515 aa).

One can recognise an MGS-like domain in the interval methionine 1–valine 145.

It belongs to the PurH family.

The catalysed reaction is (6R)-10-formyltetrahydrofolate + 5-amino-1-(5-phospho-beta-D-ribosyl)imidazole-4-carboxamide = 5-formamido-1-(5-phospho-D-ribosyl)imidazole-4-carboxamide + (6S)-5,6,7,8-tetrahydrofolate. The enzyme catalyses IMP + H2O = 5-formamido-1-(5-phospho-D-ribosyl)imidazole-4-carboxamide. The protein operates within purine metabolism; IMP biosynthesis via de novo pathway; 5-formamido-1-(5-phospho-D-ribosyl)imidazole-4-carboxamide from 5-amino-1-(5-phospho-D-ribosyl)imidazole-4-carboxamide (10-formyl THF route): step 1/1. It participates in purine metabolism; IMP biosynthesis via de novo pathway; IMP from 5-formamido-1-(5-phospho-D-ribosyl)imidazole-4-carboxamide: step 1/1. This chain is Bifunctional purine biosynthesis protein PurH, found in Streptococcus pyogenes serotype M18 (strain MGAS8232).